Reading from the N-terminus, the 229-residue chain is Potassium/proton antiporter CemA (229 aa).

3 consecutive transmembrane segments (helical) span residues 6–26 (AFIPFLYLASIVFLPWWISLS), 114–134 (ILCFVILSGYSILGNEELLII), and 189–209 (IISGLVSTFPVILDTIFKYWI).

This sequence belongs to the CemA family.

It is found in the plastid. It localises to the chloroplast inner membrane. It carries out the reaction K(+)(in) + H(+)(out) = K(+)(out) + H(+)(in). Functionally, contributes to K(+)/H(+) antiport activity by supporting proton efflux to control proton extrusion and homeostasis in chloroplasts in a light-dependent manner to modulate photosynthesis. Prevents excessive induction of non-photochemical quenching (NPQ) under continuous-light conditions. Indirectly promotes efficient inorganic carbon uptake into chloroplasts. In Carica papaya (Papaya), this protein is Potassium/proton antiporter CemA.